The sequence spans 345 residues: Protein sdf-9 (345 aa).

A Tyrosine-protein phosphatase domain is found at 33–284 (NRNRVVKIVP…SFIYEAVLDY (252 aa)).

This sequence belongs to the protein-tyrosine phosphatase family. As to expression, expressed in the 2 embryonic head hypodermal cells XXXL/R.

It localises to the cytoplasm. The protein localises to the cell membrane. In terms of biological role, together with eak-4 and phosphatase eak-6, negatively regulates dauer larva formation downstream of insulin-like receptor daf-2 and in parallel of age-1, pdk-1 and akt-1. The chain is Protein sdf-9 from Caenorhabditis elegans.